Here is a 147-residue protein sequence, read N- to C-terminus: MATNTSSNLLTNPYTEREKKLIDEAYYRDLKYNLTSKSRWKFIGDVSETLSQICVGTSSVLAFASGFFEDIDILAFVAGTVGVGSLVLLQFSSYAMKESSERTQQVNVILTKLGLETIPDIVVEPSIIKARLQGELGEQENDVVIEV.

A helical membrane pass occupies residues 71–91 (IDILAFVAGTVGVGSLVLLQF).

It is found in the virion. Its subcellular location is the host membrane. This is an uncharacterized protein from Acanthamoeba polyphaga mimivirus (APMV).